The primary structure comprises 1657 residues: A disintegrin and metalloproteinase with thrombospondin motifs 7 (1657 aa).

Residues 1 to 20 form the signal peptide; the sequence is MHRGPSLLLILCALASRVLG. Positions 21–220 are excised as a propeptide; it reads PASGLVTEGR…QQQQKRRQQR (200 aa). Asparagine 84 carries an N-linked (GlcNAc...) asparagine glycan. The disordered stretch occupies residues 165–221; sequence PGHAQPHVVYKHQGSRKQAQQGDSRPSGTCGMQVPPDLEQQREHWEQQQQKRRQQRS. The segment covering 180–191 has biased composition (polar residues); the sequence is RKQAQQGDSRPS. The Cysteine switch motif lies at 192-199; that stretch reads GTCGMQVP. Cysteine 194 is a binding site for Zn(2+). Residues 226-437 form the Peptidase M12B domain; that stretch reads KWVETLVVAD…GWGLCLDDRP (212 aa). Disulfide bonds link cysteine 302–cysteine 356, cysteine 331–cysteine 338, cysteine 350–cysteine 432, cysteine 389–cysteine 416, cysteine 459–cysteine 482, cysteine 470–cysteine 488, cysteine 477–cysteine 507, cysteine 501–cysteine 512, cysteine 535–cysteine 572, cysteine 539–cysteine 577, and cysteine 550–cysteine 562. Histidine 372 provides a ligand contact to Zn(2+). Residue glutamate 373 is part of the active site. Residues histidine 376 and histidine 382 each contribute to the Zn(2+) site. The 76-residue stretch at 447 to 522 folds into the Disintegrin domain; it reads VLPGVLYDVN…VPEGFQPEAV (76 aa). The TSP type-1 1 domain occupies 523-578; it reads DGGWSGWSAWSDCSRSCGVGVRSSERQCTQPVPKNRGKYCVGERKRSQLCNLPACP. Residue asparagine 622 is glycosylated (N-linked (GlcNAc...) asparagine). The segment at 683–794 is spacer; sequence QTVSRTFKET…PGVHYQYTIQ (112 aa). TSP type-1 domains follow at residues 804-863, 864-923, and 925-978; these read PEFS…EPCP, PRWW…NRHV, and CPST…QPCQ. Disordered stretches follow at residues 1009–1034, 1073–1127, 1140–1237, 1283–1304, and 1317–1384; these read LAPRPSPASSPKPVSISNAIDEEELD, GGWT…GLEQ, EDTP…DVVE, GRDSPLEPGTPTFSSPELSSQH, and TVPT…ARNA. Pro residues predominate over residues 1211-1224; the sequence is PQSPIPTQPSPPSI. 2 stretches are compositionally biased toward polar residues: residues 1293-1304 and 1327-1342; these read PTFSSPELSSQH and PSGQPQTPNLEGTQSP. TSP type-1 domains follow at residues 1366 to 1414, 1417 to 1477, 1479 to 1522, and 1524 to 1584; these read QPSL…SGND, CTLA…CQPG, TKPP…PEPG, and CEES…LCSH. A PLAC domain is found at 1587 to 1627; the sequence is WPESSRPCATEDCELVEPPRCERDRLSFNFCETLRLLGRCQ.

In terms of assembly, interacts with COMP. Requires Zn(2+) as cofactor. N-glycosylated. Can be O-fucosylated by POFUT2 on a serine or a threonine residue found within the consensus sequence C1-X(2)-(S/T)-C2-G of the TSP type-1 repeat domains where C1 and C2 are the first and second cysteine residue of the repeat, respectively. Fucosylated repeats can then be further glycosylated by the addition of a beta-1,3-glucose residue by the glucosyltransferase, B3GALTL. Fucosylation mediates the efficient secretion of ADAMTS family members. Can also be C-glycosylated with one or two mannose molecules on tryptophan residues within the consensus sequence W-X-X-W of the TPRs. N- and C-glycosylations can also facilitate secretion. Post-translationally, O-glycosylated proteoglycan; contains chondroitin sulfate. In terms of processing, may be cleaved by a furin endopeptidase. The precursor is sequentially processed.

The protein resides in the secreted. It is found in the extracellular space. The protein localises to the extracellular matrix. Its function is as follows. Metalloprotease. Was previously shown to degrade COMP. However, a later study found no activity against COMP. In Mus musculus (Mouse), this protein is A disintegrin and metalloproteinase with thrombospondin motifs 7 (Adamts7).